The following is a 337-amino-acid chain: tRNA N6-adenosine threonylcarbamoyltransferase (337 aa).

Fe cation is bound by residues histidine 111 and histidine 115. Substrate is bound by residues 134 to 138, aspartate 167, glycine 180, and asparagine 272; that span reads LVSGG. Fe cation is bound at residue aspartate 300.

The protein belongs to the KAE1 / TsaD family. Fe(2+) is required as a cofactor.

It is found in the cytoplasm. It carries out the reaction L-threonylcarbamoyladenylate + adenosine(37) in tRNA = N(6)-L-threonylcarbamoyladenosine(37) in tRNA + AMP + H(+). Required for the formation of a threonylcarbamoyl group on adenosine at position 37 (t(6)A37) in tRNAs that read codons beginning with adenine. Is involved in the transfer of the threonylcarbamoyl moiety of threonylcarbamoyl-AMP (TC-AMP) to the N6 group of A37, together with TsaE and TsaB. TsaD likely plays a direct catalytic role in this reaction. The chain is tRNA N6-adenosine threonylcarbamoyltransferase from Shewanella amazonensis (strain ATCC BAA-1098 / SB2B).